Here is an 87-residue protein sequence, read N- to C-terminus: Acetolactate synthase isozyme 2 small subunit (87 aa).

An ACT domain is found at Gln-5–Ser-78.

Tetramer of two large and two small chains. Requires Mg(2+) as cofactor. The cofactor is thiamine diphosphate.

The catalysed reaction is 2 pyruvate + H(+) = (2S)-2-acetolactate + CO2. It participates in amino-acid biosynthesis; L-isoleucine biosynthesis; L-isoleucine from 2-oxobutanoate: step 1/4. It functions in the pathway amino-acid biosynthesis; L-valine biosynthesis; L-valine from pyruvate: step 1/4. The protein is Acetolactate synthase isozyme 2 small subunit (ilvM) of Escherichia coli O6:H1 (strain CFT073 / ATCC 700928 / UPEC).